The primary structure comprises 428 residues: 3-phosphoshikimate 1-carboxyvinyltransferase (428 aa).

Residues Lys-22, Ser-23, and Arg-27 each coordinate 3-phosphoshikimate. Lys-22 contacts phosphoenolpyruvate. 2 residues coordinate phosphoenolpyruvate: Gly-94 and Arg-122. 6 residues coordinate 3-phosphoshikimate: Ser-169, Ser-170, Gln-171, Ser-197, Asp-315, and Lys-342. Phosphoenolpyruvate is bound at residue Gln-171. Asp-315 acts as the Proton acceptor in catalysis. Positions 346, 389, and 414 each coordinate phosphoenolpyruvate.

The protein belongs to the EPSP synthase family. In terms of assembly, monomer.

It localises to the cytoplasm. It catalyses the reaction 3-phosphoshikimate + phosphoenolpyruvate = 5-O-(1-carboxyvinyl)-3-phosphoshikimate + phosphate. It participates in metabolic intermediate biosynthesis; chorismate biosynthesis; chorismate from D-erythrose 4-phosphate and phosphoenolpyruvate: step 6/7. Its function is as follows. Catalyzes the transfer of the enolpyruvyl moiety of phosphoenolpyruvate (PEP) to the 5-hydroxyl of shikimate-3-phosphate (S3P) to produce enolpyruvyl shikimate-3-phosphate and inorganic phosphate. The protein is 3-phosphoshikimate 1-carboxyvinyltransferase of Cellvibrio japonicus (strain Ueda107) (Pseudomonas fluorescens subsp. cellulosa).